We begin with the raw amino-acid sequence, 63 residues long: MKFYNIFVFVALILAITIGQSEAGWLKKIGKKIERVGQHTRDATIQGLGVAQQAANVAATARG.

The N-terminal stretch at 1-23 (MKFYNIFVFVALILAITIGQSEA) is a signal peptide. Arg62 is subject to Arginine amide.

Belongs to the cecropin family.

The protein resides in the secreted. In terms of biological role, cecropins have lytic and antibacterial activity against several Gram-positive and Gram-negative bacteria. The sequence is that of Cecropin-A1 (CecA1) from Drosophila mauritiana (Fruit fly).